Consider the following 253-residue polypeptide: Geranylgeranylglyceryl phosphate synthase (253 aa).

Mg(2+) is bound by residues Asp28 and Ser53. Sn-glycerol 1-phosphate is bound by residues 172-178 (YLEAGSG), 203-204 (GG), and 225-226 (GN).

The protein belongs to the GGGP/HepGP synthase family. Group II subfamily. The cofactor is Mg(2+).

It is found in the cytoplasm. The enzyme catalyses sn-glycerol 1-phosphate + (2E,6E,10E)-geranylgeranyl diphosphate = sn-3-O-(geranylgeranyl)glycerol 1-phosphate + diphosphate. The protein operates within membrane lipid metabolism; glycerophospholipid metabolism. Its function is as follows. Prenyltransferase that catalyzes the transfer of the geranylgeranyl moiety of geranylgeranyl diphosphate (GGPP) to the C3 hydroxyl of sn-glycerol-1-phosphate (G1P). This reaction is the first ether-bond-formation step in the biosynthesis of archaeal membrane lipids. The sequence is that of Geranylgeranylglyceryl phosphate synthase from Methanocaldococcus jannaschii (strain ATCC 43067 / DSM 2661 / JAL-1 / JCM 10045 / NBRC 100440) (Methanococcus jannaschii).